We begin with the raw amino-acid sequence, 414 residues long: Ribulose bisphosphate carboxylase large chain (414 aa).

Residues Asn-102 and Thr-152 each coordinate substrate. Residue Lys-154 is the Proton acceptor of the active site. Substrate is bound at residue Lys-156. Residues Lys-180, Asp-182, and Glu-183 each contribute to the Mg(2+) site. Residue Lys-180 is modified to N6-carboxylysine. Catalysis depends on His-273, which acts as the Proton acceptor. Substrate contacts are provided by Arg-274, His-306, and Ser-358.

Belongs to the RuBisCO large chain family. Type I subfamily. As to quaternary structure, heterohexadecamer of 8 large chains and 8 small chains; disulfide-linked. The disulfide link is formed within the large subunit homodimers. The cofactor is Mg(2+). The disulfide bond which can form in the large chain dimeric partners within the hexadecamer appears to be associated with oxidative stress and protein turnover.

It localises to the plastid. The protein localises to the chloroplast. It catalyses the reaction 2 (2R)-3-phosphoglycerate + 2 H(+) = D-ribulose 1,5-bisphosphate + CO2 + H2O. It carries out the reaction D-ribulose 1,5-bisphosphate + O2 = 2-phosphoglycolate + (2R)-3-phosphoglycerate + 2 H(+). Its function is as follows. RuBisCO catalyzes two reactions: the carboxylation of D-ribulose 1,5-bisphosphate, the primary event in carbon dioxide fixation, as well as the oxidative fragmentation of the pentose substrate in the photorespiration process. Both reactions occur simultaneously and in competition at the same active site. This Antrophyum reticulatum (Ox-tongue fern) protein is Ribulose bisphosphate carboxylase large chain (rbcL).